The following is an 81-amino-acid chain: Putative membrane protein insertion efficiency factor (81 aa).

The tract at residues asparagine 61–glutamate 81 is disordered.

It belongs to the UPF0161 family.

It localises to the cell inner membrane. Its function is as follows. Could be involved in insertion of integral membrane proteins into the membrane. The protein is Putative membrane protein insertion efficiency factor of Pseudomonas fluorescens (strain Pf0-1).